The following is a 1161-amino-acid chain: DNA-directed RNA polymerase 132 kDa polypeptide (1161 aa).

This sequence belongs to the RNA polymerase beta chain family. As to quaternary structure, the DNA-dependent RNA polymerase used for intermediate and late genes expression consists of eight subunits (147) kDa, (133) kDa, (35) kDa, (30) kDa, (22) kDa, (19) kDa, (18) kDa and (7) kDa totalling more than 500 kDa in mass. The same holoenzyme, with the addition of the transcription-specificity factor RAP94, is used for early gene expression.

It is found in the virion. The catalysed reaction is RNA(n) + a ribonucleoside 5'-triphosphate = RNA(n+1) + diphosphate. Part of the DNA-dependent RNA polymerase which catalyzes the transcription of viral DNA into RNA using the four ribonucleoside triphosphates as substrates. Responsible for the transcription of early, intermediate and late genes. DNA-dependent RNA polymerase associates with the early transcription factor (ETF), itself composed of D6 and A7, thereby allowing the early genes transcription. Late transcription, and probably also intermediate transcription, require newly synthesized RNA polymerase. The chain is DNA-directed RNA polymerase 132 kDa polypeptide (RPO132) from Fowlpox virus (strain NVSL) (FPV).